The sequence spans 358 residues: Cytoplasmic tRNA 2-thiolation protein 1 (358 aa).

It belongs to the TtcA family. CTU1/NCS6/ATPBD3 subfamily.

The protein resides in the cytoplasm. The protein operates within tRNA modification; 5-methoxycarbonylmethyl-2-thiouridine-tRNA biosynthesis. Its function is as follows. Plays a central role in 2-thiolation of mcm(5)S(2)U at tRNA wobble positions of tRNA(Lys), tRNA(Glu) and tRNA(Gln). Directly binds tRNAs and probably acts by catalyzing adenylation of tRNAs, an intermediate required for 2-thiolation. It is unclear whether it acts as a sulfurtransferase that transfers sulfur from thiocarboxylated URM1 onto the uridine of tRNAs at wobble position. Prior mcm(5) tRNA modification by the elongator complex is required for 2-thiolation. May also be involved in protein urmylation. In Candida glabrata (strain ATCC 2001 / BCRC 20586 / JCM 3761 / NBRC 0622 / NRRL Y-65 / CBS 138) (Yeast), this protein is Cytoplasmic tRNA 2-thiolation protein 1.